Reading from the N-terminus, the 3005-residue chain is Highly reducing polyketide synthase AFT9-1 (3005 aa).

Positions 1-337 (MDPQQRLLLE…GTNAHAILER (337 aa)) constitute a Ketosynthase family 3 (KS3) domain. Catalysis depends on for beta-ketoacyl synthase activity residues Cys-87, His-222, and His-260. Residues 437–751 (VFTGQGAQWP…SYMSALVRGS (315 aa)) form a malonyl-CoA:ACP transacylase (MAT) domain region. Residues 821–936 (HDLLGLKMTD…GSVEVKYAAA (116 aa)) are N-terminal hotdog fold. The tract at residues 821–1114 (HDLLGLKMTD…SGLELRRLAP (294 aa)) is dehydratase (DH) domain. The PKS/mFAS DH domain occupies 821-1118 (HDLLGLKMTD…LRRLAPTGQP (298 aa)). The active-site Proton acceptor; for dehydratase activity is His-853. Residues 963–1118 (IEKISSQELY…LRRLAPTGQP (156 aa)) form a C-terminal hotdog fold region. Catalysis depends on Asp-1028, which acts as the Proton donor; for dehydratase activity. The interval 1259–1445 (ADDSSKRCYD…MRKASLNMQL (187 aa)) is methyltransferase (CMet) domain. Residues 1683–1985 (EFMKMPVFTE…QHHRNESTVL (303 aa)) form an enoyl reductase (ER) (ER) domain region. The interval 2008–2191 (ATYVVSGGRG…YMSLNVGTIE (184 aa)) is ketoreductase (KR) domain. The Carrier domain maps to 2293–2375 (TRDFEKISQL…SLGAKVASRS (83 aa)). Ser-2335 bears the O-(pantetheine 4'-phosphoryl)serine mark.

It participates in mycotoxin biosynthesis. Highly reducing polyketide synthase; part of the gene clusters that mediate the biosynthesis of the host-selective toxins (HSTs) AF-toxins responsible for Alternaria black spot of strawberry disease by the strawberry pathotype. AF-toxin I and III are valine derivatives of 2,3-dyhydroxy-isovaleric acid and 2-hydroxy-isovaleric acid respectively, while AF II is an isoleucine derivative of 2-hydroxy-valeric acid. These derivatives are bound to a 9,10-epoxy-8-hydroxy-9-methyl-decatrienoic acid (EDA) moiety. On cellular level, AF-toxins affect plasma membrane of susceptible cells and cause a sudden increase in loss of K(+) after a few minutes of toxin treatment. The aldo-keto reductase AFTS1 catalyzes the conversion of 2-keto-isovaleric acid (2-KIV) to 2-hydroxy-isovaleric acid (2-HIV) by reduction of its ketone to an alcohol. The acyl-CoA ligase AFT1, the hydrolase AFT2 and the enoyl-CoA hydratases AFT3 and AFT6, but also the polyketide synthase AFT9, the acyl-CoA dehydrogenase AFT10, the cytochrome P450 monooxygenase AFT11 and the oxidoreductase AFT12 are all involved in the biosynthesis of the AK-, AF- and ACT-toxin common EDA structural moiety. The exact function of each enzyme, and of additional enzymes identified within the AF-toxin clusters have still to be determined. The chain is Highly reducing polyketide synthase AFT9-1 from Alternaria alternata (Alternaria rot fungus).